A 37-amino-acid polypeptide reads, in one-letter code: Protamine Z3 (37 aa).

Positions 1-37 (ARSRSRRSYGRGRRRGGRRRRRRRRRRRGGRRGRRSR) are disordered.

As to expression, testis.

It is found in the nucleus. The protein localises to the chromosome. Protamines substitute for histones in the chromatin of sperm during the haploid phase of spermatogenesis. They compact sperm DNA into a highly condensed, stable and inactive complex. The chain is Protamine Z3 from Scyliorhinus canicula (Small-spotted catshark).